We begin with the raw amino-acid sequence, 846 residues long: Rho GTPase-activating protein 12 (846 aa).

One can recognise an SH3 domain in the interval 12 to 74 (PGQVYIEVEY…PAQYVKEVTR (63 aa)). Polar residues predominate over residues 152-175 (LTHNNGKFNNDSHSPKVSSQNRTR). The segment at 152 to 241 (LTHNNGKFNN…PPNQGRPDSP (90 aa)) is disordered. Phosphoserine occurs at positions 165 and 176. Residues 191-200 (TSFSQEQSCD) show a composition bias toward polar residues. Residues S201, S213, and S215 each carry the phosphoserine modification. Residues 224 to 234 (TEQIRATTPPN) are compositionally biased toward polar residues. Phosphothreonine is present on residues T230 and T231. A Phosphoserine modification is found at S240. The residue at position 243 (Y243) is a Phosphotyrosine. WW domains lie at 265–298 (IQINGEWETHKDSSGRCYYYNRGTQERTWKPPRW) and 358–391 (DYTNEKWLKHVDDQGRQYYYSADGSRSEWELPKY). A disordered region spans residues 293 to 316 (WKPPRWTRDASISKGDFQNPGDQE). Disordered stretches follow at residues 428–466 (DTNDKESPTASKPCFPENESSPSSPKHQDTASSPKDQEK) and 580–629 (ETDE…TKKN). Polar residues predominate over residues 445–461 (NESSPSSPKHQDTASSP). In terms of domain architecture, PH spans 463–575 (DQEKYGLLNV…WFKVLSSTIN (113 aa)). Over residues 580–590 (ETDEGIEEEIP) the composition is skewed to acidic residues. S592 is modified (phosphoserine). The span at 594 to 609 (GIEKHDKEKEQKDPKK) shows a compositional bias: basic and acidic residues. Residues 656–844 (SNLANLCQRE…LILLELSSIF (189 aa)) enclose the Rho-GAP domain.

Its function is as follows. GTPase activator for the Rho-type GTPases by converting them to an inactive GDP-bound state. The chain is Rho GTPase-activating protein 12 (ARHGAP12) from Homo sapiens (Human).